The primary structure comprises 303 residues: Probable 5-dehydro-4-deoxyglucarate dehydratase (303 aa).

The protein belongs to the DapA family.

It carries out the reaction 5-dehydro-4-deoxy-D-glucarate + H(+) = 2,5-dioxopentanoate + CO2 + H2O. Its pathway is carbohydrate acid metabolism; D-glucarate degradation; 2,5-dioxopentanoate from D-glucarate: step 2/2. The polypeptide is Probable 5-dehydro-4-deoxyglucarate dehydratase (Agrobacterium fabrum (strain C58 / ATCC 33970) (Agrobacterium tumefaciens (strain C58))).